Consider the following 51-residue polypeptide: Glutamine synthetase (51 aa).

The protein belongs to the glutamine synthetase family. Homooctamer.

The protein resides in the cytoplasm. The enzyme catalyses L-glutamate + NH4(+) + ATP = L-glutamine + ADP + phosphate + H(+). The protein is Glutamine synthetase of Vitis sp. (Grape).